The chain runs to 321 residues: NADH-ubiquinone oxidoreductase chain 1 (321 aa).

Helical transmembrane passes span 2-22 (LVMLTSTLILVLMVLLAVAFL), 71-91 (ALFIAAPIMALTLALSLWMFI), 104-124 (LLVILAISSLSVYASLGSGWA), 148-168 (LGLILLCLIILTGGFSLQAFI), 173-193 (HTWFLLSSWPLAAMWFVSTLA), 224-244 (LFFLAEYSNILFMNTLTAIMF), 255-275 (ILPIINVMMKATPLIILFLWI), and 295-315 (FLPLNLALFTLQLSLAVSLGG).

This sequence belongs to the complex I subunit 1 family.

The protein localises to the mitochondrion inner membrane. It carries out the reaction a ubiquinone + NADH + 5 H(+)(in) = a ubiquinol + NAD(+) + 4 H(+)(out). Its function is as follows. Core subunit of the mitochondrial membrane respiratory chain NADH dehydrogenase (Complex I) that is believed to belong to the minimal assembly required for catalysis. Complex I functions in the transfer of electrons from NADH to the respiratory chain. The immediate electron acceptor for the enzyme is believed to be ubiquinone. This chain is NADH-ubiquinone oxidoreductase chain 1 (MT-ND1), found in Lampetra fluviatilis (European river lamprey).